We begin with the raw amino-acid sequence, 262 residues long: MWSPIPGTLMRTSSLPAVIEASGNDDWKKRKEAQSLKRLEVKKKRIERRNSLACNTSKEAAGQSPKEMNANTDKLVSSDETIVSANESHSSGKHLVKGLPPKYQATITSEDSSSAMRKKPNSAFKGTAITEEQNSSSSVPSSGEAISSVTAPSLPLLSLVPITATLGSREDQSILGRAGARANGMGDVERRMMQEMPGVFTKGLSNGSRVEGFLYKYSKGEVRIVCICHGSFLTPSEFVEHAGAGKVDNPLRHIVVSATPNL.

The disordered stretch occupies residues 49 to 70 (RNSLACNTSKEAAGQSPKEMNA).

Belongs to the Ninja family.

Its subcellular location is the nucleus. This is Ninja-family protein 2 from Zea mays (Maize).